Consider the following 348-residue polypeptide: Putative transport protein HI_0338 (348 aa).

The next 9 membrane-spanning stretches (helical) occupy residues 7–27 (LHRT…VKLA), 28–48 (AEIV…SPII), 60–80 (LAIT…VGLI), 139–159 (VLLN…VVIF), 196–216 (VIGY…GVFI), 223–243 (VQYA…PNIG), 245–265 (IIAA…GIGF), 267–287 (VAIG…PKMM), and 296–316 (LVVF…GMLL).

This sequence belongs to the autoinducer-2 exporter (AI-2E) (TC 2.A.86) family.

Its subcellular location is the cell membrane. The sequence is that of Putative transport protein HI_0338 from Haemophilus influenzae (strain ATCC 51907 / DSM 11121 / KW20 / Rd).